The primary structure comprises 158 residues: Endoribonuclease YbeY (158 aa).

Residues H119, H123, and H129 each contribute to the Zn(2+) site.

Belongs to the endoribonuclease YbeY family. It depends on Zn(2+) as a cofactor.

It is found in the cytoplasm. Its function is as follows. Single strand-specific metallo-endoribonuclease involved in late-stage 70S ribosome quality control and in maturation of the 3' terminus of the 16S rRNA. The sequence is that of Endoribonuclease YbeY from Acinetobacter baumannii (strain SDF).